A 339-amino-acid polypeptide reads, in one-letter code: Glyceraldehyde-3-phosphate dehydrogenase (339 aa).

Residues Arg-12–Ile-13, Asp-35, and Lys-84 each bind NAD(+). D-glyceraldehyde 3-phosphate is bound by residues Ser-155–Thr-157, Thr-186, Thr-215–Gly-216, and Arg-238. Catalysis depends on Cys-156, which acts as the Nucleophile. Asn-320 lines the NAD(+) pocket.

Belongs to the glyceraldehyde-3-phosphate dehydrogenase family. As to quaternary structure, homotetramer.

It is found in the cytoplasm. It catalyses the reaction D-glyceraldehyde 3-phosphate + phosphate + NAD(+) = (2R)-3-phospho-glyceroyl phosphate + NADH + H(+). Its pathway is carbohydrate degradation; glycolysis; pyruvate from D-glyceraldehyde 3-phosphate: step 1/5. The polypeptide is Glyceraldehyde-3-phosphate dehydrogenase (GAPD) (Mastigamoeba balamuthi (Phreatamoeba balamuthi)).